Here is a 1050-residue protein sequence, read N- to C-terminus: NAD-specific glutamate dehydrogenase (1050 aa).

The disordered stretch occupies residues 1 to 39 (MDSPSAPVPAHKLVDRLKDQTPRHPSPQPTHVSYPKVNG). A compositionally biased stretch (basic and acidic residues) spans 12–22 (KLVDRLKDQTP). The active site involves K594.

It belongs to the Glu/Leu/Phe/Val dehydrogenases family. In terms of assembly, homotetramer.

It catalyses the reaction L-glutamate + NAD(+) + H2O = 2-oxoglutarate + NH4(+) + NADH + H(+). The protein is NAD-specific glutamate dehydrogenase (gdh-1) of Neurospora crassa (strain ATCC 24698 / 74-OR23-1A / CBS 708.71 / DSM 1257 / FGSC 987).